The sequence spans 66 residues: MAKGKDARVTVILECTRCVRNGVNKQSIGISRYITQKNRHNTPSRLELRKFCPRCYKHTIHGEIKK.

It belongs to the bacterial ribosomal protein bL33 family.

It localises to the plastid. The protein localises to the chloroplast. The polypeptide is Large ribosomal subunit protein bL33c (Cucumis sativus (Cucumber)).